The chain runs to 628 residues: tRNA (guanine(37)-N(1))-methyltransferase (628 aa).

S-adenosyl-L-methionine contacts are provided by residues His-265, 303 to 304 (DL), 342 to 343 (DG), and Asn-445.

It belongs to the class I-like SAM-binding methyltransferase superfamily. TRM5/TYW2 family. As to quaternary structure, monomer.

The protein resides in the mitochondrion matrix. It localises to the nucleus. Its subcellular location is the cytoplasm. The catalysed reaction is guanosine(37) in tRNA + S-adenosyl-L-methionine = N(1)-methylguanosine(37) in tRNA + S-adenosyl-L-homocysteine + H(+). In terms of biological role, specifically methylates the N1 position of guanosine-37 in various cytoplasmic and mitochondrial tRNAs. Methylation is not dependent on the nature of the nucleoside 5' of the target nucleoside. This is the first step in the biosynthesis of wybutosine (yW), a modified base adjacent to the anticodon of tRNAs and required for accurate decoding. This is tRNA (guanine(37)-N(1))-methyltransferase from Mycosarcoma maydis (Corn smut fungus).